Consider the following 26-residue polypeptide: Toxin TdII-1 (26 aa).

The protein belongs to the long (4 C-C) scorpion toxin superfamily. Sodium channel inhibitor family. Beta subfamily. As to expression, expressed by the venom gland.

Its subcellular location is the secreted. Its function is as follows. Beta toxins bind voltage-independently at site-4 of sodium channels (Nav) and shift the voltage of activation toward more negative potentials thereby affecting sodium channel activation and promoting spontaneous and repetitive firing. This toxin is active against mammals and crustaceans. The chain is Toxin TdII-1 from Tityus discrepans (Venezuelan scorpion).